The primary structure comprises 313 residues: Ribosomal RNA small subunit methyltransferase H (313 aa).

Residues 35–37 (GGH), Asp55, Phe79, Asp101, and Gln108 each bind S-adenosyl-L-methionine.

This sequence belongs to the methyltransferase superfamily. RsmH family.

It is found in the cytoplasm. The catalysed reaction is cytidine(1402) in 16S rRNA + S-adenosyl-L-methionine = N(4)-methylcytidine(1402) in 16S rRNA + S-adenosyl-L-homocysteine + H(+). Its function is as follows. Specifically methylates the N4 position of cytidine in position 1402 (C1402) of 16S rRNA. This Erwinia tasmaniensis (strain DSM 17950 / CFBP 7177 / CIP 109463 / NCPPB 4357 / Et1/99) protein is Ribosomal RNA small subunit methyltransferase H.